Here is a 137-residue protein sequence, read N- to C-terminus: Peptide methionine sulfoxide reductase MsrB (137 aa).

In terms of domain architecture, MsrB spans 9–131 (DAEWRAMLDD…NSASLRFDAT (123 aa)). 4 residues coordinate Zn(2+): Cys-48, Cys-51, Cys-97, and Cys-100. The active-site Nucleophile is Cys-120.

Belongs to the MsrB Met sulfoxide reductase family. Zn(2+) serves as cofactor.

It catalyses the reaction L-methionyl-[protein] + [thioredoxin]-disulfide + H2O = L-methionyl-(R)-S-oxide-[protein] + [thioredoxin]-dithiol. This is Peptide methionine sulfoxide reductase MsrB from Herminiimonas arsenicoxydans.